A 329-amino-acid polypeptide reads, in one-letter code: Ankyrin repeat and SOCS box protein 5 (329 aa).

6 ANK repeats span residues 69 to 98 (ADRSPLHEAASQGRLLALRTLLSQGYNVNA), 102 to 131 (DHITPLHEACLGDHVACARTLLEAGANVNA), 135 to 164 (DGVTPLFNACSQGSTSCTELLLEYGAKAQL), 167 to 196 (CLPSPTHEAASKGHHEFLDLLISWGIDVDQ), 200 to 229 (HLGTPLYVACMSQQFHCIWKLLYAGADVQK), and 232 to 261 (YWDTPLHAAAQQSSTEIVNLLIEFGADINA). One can recognise an SOCS box domain in the interval 278–329 (MVERILLQHEATPSSLCQLCRLCIRNYIGRPRLHLIPQLQLPTLLQNFLQYR).

The protein belongs to the ankyrin SOCS box (ASB) family. Expressed in endothelial and smooth muscle cells of collateral arteries as well as in satellite cells.

Its pathway is protein modification; protein ubiquitination. Its function is as follows. May be a substrate-recognition component of a SCF-like ECS (Elongin-Cullin-SOCS-box protein) E3 ubiquitin-protein ligase complex which mediates the ubiquitination and subsequent proteasomal degradation of target proteins. May play a role in the initiation of arteriogenesis. In Oryctolagus cuniculus (Rabbit), this protein is Ankyrin repeat and SOCS box protein 5 (ASB5).